The following is a 459-amino-acid chain: MGSQATTYHMAMYPWFGVGHLTGFFRLANKLAGKGHRISFLIPKNTQSKLESFNLHPHLISFVPIVVPSIPGLPPGAETTSDVPFPSTHLLMEAMDKTQNDIEIILKDLKVDVVFYDFTHWLPSLARKIGIKSVFYSTISPLMHGYALSPERRVVGKQLTEADMMKAPASFPDPSIKLHAHEARGFTARTVMKFGGDITFFDRIFTAVSESDGLAYSTCREIEGQFCDYIETQFQKPVLLAGPALPVPSKSTMEQKWSDWLGKFKEGSVIYCAFGSECTLRKDKFQELLWGLELTGMPFFAALKPPFEAESIEAAIPEELKEKIQGRGIVHGEWVQQQLFLQHPSVGCFVSHCGWASLSEALVNDCQIVLLPQVGDQIINARIMSVSLKVGVEVEKGEEDGVFSRESVCKAVKAVMDEKSEIGREVRGNHDKLRGFLLNADLDSKYMDSFNQKLQDLLG.

H20 functions as the Proton acceptor in the catalytic mechanism. An anthocyanidin is bound at residue H20. The active-site Charge relay is D117. Residues T138, V335, Q337, H352, W355, S357, and E360 each coordinate UDP-alpha-D-glucose. G375 provides a ligand contact to an anthocyanidin. UDP-alpha-D-glucose contacts are provided by D376 and Q377.

The protein belongs to the UDP-glycosyltransferase family. Mainly expressed in the petals and tubes of flower buds at around 24 hours before flower opening.

It catalyses the reaction an anthocyanidin 3-O-beta-D-glucoside + UDP-alpha-D-glucose = an anthocyanidin 3-O-sophoroside + UDP + 2 H(+). It functions in the pathway pigment biosynthesis; anthocyanin biosynthesis. Functionally, glycosyltransferase that mediates the glucosylation of anthocyanidin 3-O-glucosides to yield anthocyanidin 3-O-sophorosides. 3-O-sophoroside derivatives are required for the bright blue or red color of flowers. The sequence is that of Anthocyanidin 3-O-glucoside 2''-O-glucosyltransferase (3GGT) from Ipomoea nil (Japanese morning glory).